The chain runs to 165 residues: MALGLEDKKAIVAEVNEAAKGALSAVVADSRGVTVANMTGLRKAAREAGVYIRVVRNTLVKRAVAGTDFECLSDTFTGPTLIAFSTEHPGAAARLLKDFAKAQEKFEIKAAAFEGELIPAENIDRLAKLPTYEEALAQFMMTLKEASAGKFVRTLAALRDQKEAA.

The protein belongs to the universal ribosomal protein uL10 family. Part of the ribosomal stalk of the 50S ribosomal subunit. The N-terminus interacts with L11 and the large rRNA to form the base of the stalk. The C-terminus forms an elongated spine to which L12 dimers bind in a sequential fashion forming a multimeric L10(L12)X complex.

In terms of biological role, forms part of the ribosomal stalk, playing a central role in the interaction of the ribosome with GTP-bound translation factors. This chain is Large ribosomal subunit protein uL10, found in Shewanella halifaxensis (strain HAW-EB4).